A 549-amino-acid polypeptide reads, in one-letter code: MNQGHPQPDMYYSPHYSTPQYGYGYSTNGAPTTAVSTPMPAPQNVLPVPSALSNQGAMQQPGYSNSSNNGAFDTTGQHNPPGMKPRVTATLWEDEGSLCFQVEARGICVARREDNHMINGTKLLNVAGMTRGRRDGILKSEKVRHVVKIGPMHLKGVWIPYDRALDFANKEKITELLFPLFVHNIGALLYHPSNSNRTSQVMAAAERRKHEGLGGQRPPAPNALPSIGQHHPMMPGLPTGGYVPQSLANGPQSLASTPQPLANGSQPPMPNGGGMLKRGREEEEDLHRPVSNGHDPMSNMHAMSNGYPQQPPLANVHQPPMQNGGDMLKRGREEDDEVHRSAHNAHDTMNNMPGSMPGMSNAYAQPLPNVHHQPLANGDGGMLKRGRDEDDDHRSSPNGHDSAGNFEAKRRKTITSNDSMVSPGGFYTLHNGYGQPGVMNGMSPYKRRDDEAETPRPGPNVHDHLNNFDLKRHKTMETSVPAPQYDAMNRPHSSIGTSPSYAPAPVYDNLARPASTVAASPSYPSAPVYDTAARPPSAISAPRRQQSFG.

In terms of domain architecture, HTH APSES-type spans 86 to 192; it reads RVTATLWEDE…HNIGALLYHP (107 aa). Positions 120-141 form a DNA-binding region, H-T-H motif; sequence GTKLLNVAGMTRGRRDGILKSE. 4 disordered regions span residues 205–227, 246–288, 332–466, and 514–549; these read AERR…LPSI, SLAN…DLHR, REED…DHLN, and ASTV…QSFG. Residues 246 to 266 are compositionally biased toward polar residues; the sequence is SLANGPQSLASTPQPLANGSQ. Basic and acidic residues-rich tracts occupy residues 278 to 288, 332 to 346, and 385 to 395; these read RGREEEEDLHR, REED…HNAH, and RGRDEDDDHRS. The tract at residues 516 to 545 is nuclear localization domain; sequence TVAASPSYPSAPVYDTAARPPSAISAPRRQ. Residues 532 to 549 show a composition bias toward low complexity; sequence AARPPSAISAPRRQQSFG.

Belongs to the EFG1/PHD1/stuA family.

It localises to the nucleus. Functionally, transcription factor that regulates asexual reproduction. Binds the StuA-response elements (StRE) with the consensus sequence 5'-(A/T)CGCG(T/A)N(A/C)-3' at the promoters of target genes. This is Cell pattern formation-associated protein StuA from Gibberella moniliformis (strain M3125 / FGSC 7600) (Maize ear and stalk rot fungus).